The following is a 224-amino-acid chain: Urease accessory protein UreF (224 aa).

This sequence belongs to the UreF family. In terms of assembly, ureD, UreF and UreG form a complex that acts as a GTP-hydrolysis-dependent molecular chaperone, activating the urease apoprotein by helping to assemble the nickel containing metallocenter of UreC. The UreE protein probably delivers the nickel.

The protein resides in the cytoplasm. Functionally, required for maturation of urease via the functional incorporation of the urease nickel metallocenter. The sequence is that of Urease accessory protein UreF from Klebsiella pneumoniae subsp. pneumoniae (strain ATCC 700721 / MGH 78578).